The chain runs to 503 residues: Maturase K (503 aa).

This sequence belongs to the intron maturase 2 family. MatK subfamily.

The protein localises to the plastid. It is found in the chloroplast. Usually encoded in the trnK tRNA gene intron. Probably assists in splicing its own and other chloroplast group II introns. This is Maturase K from Diospyros kaki (Kaki persimmon).